Here is a 336-residue protein sequence, read N- to C-terminus: Pyridoxal 5'-phosphate synthase subunit PdxS (336 aa).

Asp-33 contacts D-ribose 5-phosphate. Residue Lys-90 is the Schiff-base intermediate with D-ribose 5-phosphate of the active site. Gly-162 is a D-ribose 5-phosphate binding site. D-glyceraldehyde 3-phosphate is bound at residue Arg-174. D-ribose 5-phosphate-binding positions include Gly-260 and 281 to 282 (GS).

This sequence belongs to the PdxS/SNZ family. As to quaternary structure, in the presence of PdxT, forms a dodecamer of heterodimers.

It catalyses the reaction aldehydo-D-ribose 5-phosphate + D-glyceraldehyde 3-phosphate + L-glutamine = pyridoxal 5'-phosphate + L-glutamate + phosphate + 3 H2O + H(+). Its pathway is cofactor biosynthesis; pyridoxal 5'-phosphate biosynthesis. Functionally, catalyzes the formation of pyridoxal 5'-phosphate from ribose 5-phosphate (RBP), glyceraldehyde 3-phosphate (G3P) and ammonia. The ammonia is provided by the PdxT subunit. Can also use ribulose 5-phosphate and dihydroxyacetone phosphate as substrates, resulting from enzyme-catalyzed isomerization of RBP and G3P, respectively. The polypeptide is Pyridoxal 5'-phosphate synthase subunit PdxS (Picrophilus torridus (strain ATCC 700027 / DSM 9790 / JCM 10055 / NBRC 100828 / KAW 2/3)).